The following is a 109-amino-acid chain: Flagellar hook-basal body complex protein FliE 2 (109 aa).

This sequence belongs to the FliE family.

It is found in the bacterial flagellum basal body. The protein is Flagellar hook-basal body complex protein FliE 2 (fliE2) of Bradyrhizobium diazoefficiens (strain JCM 10833 / BCRC 13528 / IAM 13628 / NBRC 14792 / USDA 110).